The chain runs to 396 residues: Elongation factor Tu (396 aa).

The 197-residue stretch at 10 to 206 folds into the tr-type G domain; the sequence is KPHVNVGTIG…VLDTYIPEPE (197 aa). The segment at 19-26 is G1; the sequence is GHVDHGKT. 19–26 lines the GTP pocket; sequence GHVDHGKT. T26 provides a ligand contact to Mg(2+). Residues 60–64 form a G2 region; that stretch reads GITIN. The segment at 81–84 is G3; that stretch reads DCPG. GTP-binding positions include 81–85 and 136–139; these read DCPGH and NKCD. Residues 136-139 are G4; sequence NKCD. The tract at residues 174-176 is G5; it reads SAT.

This sequence belongs to the TRAFAC class translation factor GTPase superfamily. Classic translation factor GTPase family. EF-Tu/EF-1A subfamily. As to quaternary structure, monomer.

It localises to the cytoplasm. It catalyses the reaction GTP + H2O = GDP + phosphate + H(+). Functionally, GTP hydrolase that promotes the GTP-dependent binding of aminoacyl-tRNA to the A-site of ribosomes during protein biosynthesis. The polypeptide is Elongation factor Tu (Psychrobacter cryohalolentis (strain ATCC BAA-1226 / DSM 17306 / VKM B-2378 / K5)).